The chain runs to 640 residues: Dextranase (640 aa).

The N-terminal stretch at 1-32 (MPGTGLGRLAKRMTAAAAVFFISTSAVLPAQA) is a signal peptide. A propeptide spanning residues 33-49 (ATAPAAAPPGVPAALKA) is cleaved from the precursor. Positions 248-269 (EQKERLVPTEESGSIHYPEPGE) are disordered.

The protein belongs to the glycosyl hydrolase 49 family.

It is found in the secreted. The catalysed reaction is Endohydrolysis of (1-&gt;6)-alpha-D-glucosidic linkages in dextran.. Efficiently decomposes water-insoluble glucan as well as dextran. This chain is Dextranase, found in Arthrobacter sp. (strain CB-8).